The following is a 245-amino-acid chain: 1-(5-phosphoribosyl)-5-[(5-phosphoribosylamino)methylideneamino] imidazole-4-carboxamide isomerase (245 aa).

Residue Asp-7 is the Proton acceptor of the active site. Asp-129 (proton donor) is an active-site residue.

The protein belongs to the HisA/HisF family.

The protein localises to the cytoplasm. The enzyme catalyses 1-(5-phospho-beta-D-ribosyl)-5-[(5-phospho-beta-D-ribosylamino)methylideneamino]imidazole-4-carboxamide = 5-[(5-phospho-1-deoxy-D-ribulos-1-ylimino)methylamino]-1-(5-phospho-beta-D-ribosyl)imidazole-4-carboxamide. It participates in amino-acid biosynthesis; L-histidine biosynthesis; L-histidine from 5-phospho-alpha-D-ribose 1-diphosphate: step 4/9. The protein is 1-(5-phosphoribosyl)-5-[(5-phosphoribosylamino)methylideneamino] imidazole-4-carboxamide isomerase of Enterobacter sp. (strain 638).